The sequence spans 453 residues: Dibenzothiophene-sulfone monooxygenase (453 aa).

Positions 59, 106, 156, 160, and 231 each coordinate FMN.

Belongs to the NtaA/SnaA/DszA monooxygenase family. As to quaternary structure, homodimer.

Its subcellular location is the cytoplasm. The catalysed reaction is dibenzothiophene 5,5-dioxide + FMNH2 + NADH + O2 = 2'-hydroxybiphenyl-2-sulfinate + FMN + NAD(+) + H2O + H(+). It functions in the pathway sulfur metabolism; dibenzothiophene degradation. Its function is as follows. Catalyzes the second step of the '4S' desulfurization pathway that removes covalently bound sulfur from dibenzothiophene (DBT) without breaking carbon-carbon bonds. Metabolizes DBT-sulfone (DBTO2 or DBT 5,5-dioxide) to 2-(2'-hydroxyphenyl)benzene sulphinate (HBPS). The sequence is that of Dibenzothiophene-sulfone monooxygenase from Rhodococcus erythropolis (Arthrobacter picolinophilus).